Here is a 398-residue protein sequence, read N- to C-terminus: Membrane-spanning 4-domains subfamily A member 18 (398 aa).

Transmembrane regions (helical) follow at residues 156-176 (LGAI…NPVL), 178-198 (YYPF…SYIV), 218-238 (SISF…IIIT), and 251-271 (AVSG…CVVS). A disordered region spans residues 316 to 346 (TGPVSATNGPVNTTIHPVNTTTSPVNTTTSP). Polar residues predominate over residues 319-331 (VSATNGPVNTTIH). The span at 332 to 346 (PVNTTTSPVNTTTSP) shows a compositional bias: low complexity.

The protein belongs to the MS4A family.

It is found in the membrane. The polypeptide is Membrane-spanning 4-domains subfamily A member 18 (MS4A18) (Homo sapiens (Human)).